Reading from the N-terminus, the 407-residue chain is P2X receptor D (407 aa).

Over 1 to 22 the chain is Cytoplasmic; the sequence is MDWDNIFSYNTAKIVTIKDRRL. The chain crosses the membrane as a helical span at residues 23 to 43; sequence GGLHIIFMVLIIVYIVIYSTI. Residues 44–300 lie on the Lumenal side of the membrane; it reads YKKGYLLTET…IQNGEIGSFN (257 aa). A pore-forming motif region spans residues 283–296; the sequence is RHGIRLIFIQNGEI. A helical transmembrane segment spans residues 301–321; it reads FQALLLTFVSGLGLLAISTVL. The Cytoplasmic portion of the chain corresponds to 322–407; sequence VDQLAIRFLP…QNIQNNNIIL (86 aa). The interval 371-394 is disordered; it reads KNNENNNNNDDYNDDDNEIFDDNN. The span at 381 to 391 shows a compositional bias: acidic residues; that stretch reads DYNDDDNEIFD.

It belongs to the P2X receptor family.

The protein localises to the contractile vacuole membrane. P2X receptors are ligand-gated ion channels that play a role in intracellular calcium signaling. ATP does not evoke inward currents in p2xD. Not essential for osmoregulation. The polypeptide is P2X receptor D (p2xD) (Dictyostelium discoideum (Social amoeba)).